Reading from the N-terminus, the 493-residue chain is Ketol-acid reductoisomerase (NADP(+)) (493 aa).

One can recognise a KARI N-terminal Rossmann domain in the interval 17–208 (LSQCRFMDRS…GGDRAGVLHS (192 aa)). NADP(+)-binding positions include 45–48 (CGAQ), Arg68, Arg76, Ser78, and 108–110 (DKQ). Residue His132 is part of the active site. Gly158 is a binding site for NADP(+). 2 consecutive KARI C-terminal knotted domains span residues 209–344 (SFIA…NAPS) and 345–486 (SNEH…MKDM). Mg(2+)-binding residues include Asp217, Glu221, Glu389, and Glu393. Ser414 contacts substrate.

The protein belongs to the ketol-acid reductoisomerase family. It depends on Mg(2+) as a cofactor.

The enzyme catalyses (2R)-2,3-dihydroxy-3-methylbutanoate + NADP(+) = (2S)-2-acetolactate + NADPH + H(+). The catalysed reaction is (2R,3R)-2,3-dihydroxy-3-methylpentanoate + NADP(+) = (S)-2-ethyl-2-hydroxy-3-oxobutanoate + NADPH + H(+). It participates in amino-acid biosynthesis; L-isoleucine biosynthesis; L-isoleucine from 2-oxobutanoate: step 2/4. Its pathway is amino-acid biosynthesis; L-valine biosynthesis; L-valine from pyruvate: step 2/4. In terms of biological role, involved in the biosynthesis of branched-chain amino acids (BCAA). Catalyzes an alkyl-migration followed by a ketol-acid reduction of (S)-2-acetolactate (S2AL) to yield (R)-2,3-dihydroxy-isovalerate. In the isomerase reaction, S2AL is rearranged via a Mg-dependent methyl migration to produce 3-hydroxy-3-methyl-2-ketobutyrate (HMKB). In the reductase reaction, this 2-ketoacid undergoes a metal-dependent reduction by NADPH to yield (R)-2,3-dihydroxy-isovalerate. In Shewanella amazonensis (strain ATCC BAA-1098 / SB2B), this protein is Ketol-acid reductoisomerase (NADP(+)).